The following is a 293-amino-acid chain: 4-hydroxy-tetrahydrodipicolinate synthase (293 aa).

Thr47 contributes to the pyruvate binding site. Residue Tyr136 is the Proton donor/acceptor of the active site. Lys164 (schiff-base intermediate with substrate) is an active-site residue. Residue Ile206 participates in pyruvate binding.

Belongs to the DapA family. In terms of assembly, homotetramer; dimer of dimers.

Its subcellular location is the cytoplasm. The enzyme catalyses L-aspartate 4-semialdehyde + pyruvate = (2S,4S)-4-hydroxy-2,3,4,5-tetrahydrodipicolinate + H2O + H(+). Its pathway is amino-acid biosynthesis; L-lysine biosynthesis via DAP pathway; (S)-tetrahydrodipicolinate from L-aspartate: step 3/4. Catalyzes the condensation of (S)-aspartate-beta-semialdehyde [(S)-ASA] and pyruvate to 4-hydroxy-tetrahydrodipicolinate (HTPA). In Listeria monocytogenes serotype 4a (strain HCC23), this protein is 4-hydroxy-tetrahydrodipicolinate synthase.